A 380-amino-acid chain; its full sequence is Beta sliding clamp (380 aa).

Belongs to the beta sliding clamp family. Forms a ring-shaped head-to-tail homodimer around DNA which binds and tethers DNA polymerases and other proteins to the DNA. The DNA replisome complex has a single clamp-loading complex (3 tau and 1 each of delta, delta', psi and chi subunits) which binds 3 Pol III cores (1 core on the leading strand and 2 on the lagging strand) each with a beta sliding clamp dimer. Additional proteins in the replisome are other copies of gamma, psi and chi, Ssb, DNA helicase and RNA primase.

It is found in the cytoplasm. Functionally, confers DNA tethering and processivity to DNA polymerases and other proteins. Acts as a clamp, forming a ring around DNA (a reaction catalyzed by the clamp-loading complex) which diffuses in an ATP-independent manner freely and bidirectionally along dsDNA. Initially characterized for its ability to contact the catalytic subunit of DNA polymerase III (Pol III), a complex, multichain enzyme responsible for most of the replicative synthesis in bacteria; Pol III exhibits 3'-5' exonuclease proofreading activity. The beta chain is required for initiation of replication as well as for processivity of DNA replication. In Lactococcus lactis subsp. lactis (strain IL1403) (Streptococcus lactis), this protein is Beta sliding clamp (dnaN).